The primary structure comprises 337 residues: Inositol 2-dehydrogenase (337 aa).

This sequence belongs to the Gfo/Idh/MocA family. In terms of assembly, homotetramer.

The catalysed reaction is myo-inositol + NAD(+) = scyllo-inosose + NADH + H(+). Its function is as follows. Involved in the oxidation of myo-inositol (MI) to 2-keto-myo-inositol (2KMI or 2-inosose). The chain is Inositol 2-dehydrogenase from Pseudarthrobacter chlorophenolicus (strain ATCC 700700 / DSM 12829 / CIP 107037 / JCM 12360 / KCTC 9906 / NCIMB 13794 / A6) (Arthrobacter chlorophenolicus).